A 294-amino-acid chain; its full sequence is Phosphatidylinositol transfer protein SFH5 (294 aa).

Positions 100–266 (HNTELQNVGI…GYGGKDKKNN (167 aa)) constitute a CRAL-TRIO domain. 5 residues coordinate heme: Tyr128, Arg148, His173, Tyr175, and Lys209.

It belongs to the SFH5 family. Heme b is required as a cofactor.

Its subcellular location is the cytoplasm. It localises to the endoplasmic reticulum membrane. The protein localises to the microsome membrane. The enzyme catalyses a 1,2-diacyl-sn-glycero-3-phospho-(1D-myo-inositol)(in) = a 1,2-diacyl-sn-glycero-3-phospho-(1D-myo-inositol)(out). In terms of biological role, non-classical phosphatidylinositol (PtdIns) transfer protein (PITP), which exhibits PtdIns-binding/transfer activity in the absence of detectable PtdCho-binding/transfer activity. Regulates PtdIns(4,5)P2 homeostasis at the plasma membrane. Heme-binding protein that may play a role in organic oxidant-induced stress responses. In Saccharomyces cerevisiae (strain YJM789) (Baker's yeast), this protein is Phosphatidylinositol transfer protein SFH5 (SFH5).